Reading from the N-terminus, the 246-residue chain is Large ribosomal subunit protein uL2 (246 aa).

The segment at 197–227 is disordered; the sequence is SPYAHPHGGGSHQKGGTPVPKTAPPGQKVGF.

The protein belongs to the universal ribosomal protein uL2 family. In terms of assembly, part of the 50S ribosomal subunit. Forms a bridge to the 30S subunit in the 70S ribosome.

In terms of biological role, one of the primary rRNA binding proteins. Required for association of the 30S and 50S subunits to form the 70S ribosome, for tRNA binding and peptide bond formation. It has been suggested to have peptidyltransferase activity; this is somewhat controversial. Makes several contacts with the 16S rRNA in the 70S ribosome. This chain is Large ribosomal subunit protein uL2, found in Pyrobaculum aerophilum (strain ATCC 51768 / DSM 7523 / JCM 9630 / CIP 104966 / NBRC 100827 / IM2).